A 601-amino-acid chain; its full sequence is Probable HECT-type ubiquitin ligase-interacting protein creD (601 aa).

Disordered regions lie at residues 374–397 (EVDPSGYRTPGPGSGPGTPFGTLS) and 454–496 (VSTD…GMAT). Positions 455-473 (STDSFGPSSGSNSQSPASP) are enriched in low complexity. Residues 475–489 (LSRRPSDEGYHDHDY) show a composition bias toward basic and acidic residues.

The protein belongs to the arrestin family. As to quaternary structure, interacts with hulA.

In terms of biological role, component of the regulatory network controlling carbon source utilization through ubiquitination and deubiquitination involving creA, creB, creC, creD and acrB. May be involved in signaling by recognizing appropriately phosphorylated substrates via its arrestin domains and then recruit a HECT-type ubiquitin ligase such as hulA, leading to ubiquitination of the substrate, providing a link between ubiquitination and phosphorylation in protein regulation and stability. This chain is Probable HECT-type ubiquitin ligase-interacting protein creD (creD), found in Aspergillus fumigatus (strain CBS 144.89 / FGSC A1163 / CEA10) (Neosartorya fumigata).